The sequence spans 576 residues: Putative SPbeta prophage-derived single-strand DNA-specific exonuclease YorK (576 aa).

Residue Y473 is modified to Phosphotyrosine.

This sequence belongs to the RecJ family.

In terms of biological role, putative single-stranded-DNA-specific exonuclease. The sequence is that of Putative SPbeta prophage-derived single-strand DNA-specific exonuclease YorK (yorK) from Bacillus subtilis (strain 168).